The sequence spans 276 residues: MQTITNAWFVQGMIKATTDAWLKGWDERNGGNLTLRLDNADIAPFEADFHQKPRYIALSQPMPLLANTAFIVTGSGKFFRNVQLDPTANLGVVKVDSDGAGYHILWGLTNEAVPTSELPAHFLSHCERIKATDGKDRVIMHCHATNLIALTYVLENDSAFITRKLWEGSTECLVVFPDGVGILPWMVPGTDEIGQATAQDMQKHSLVLWPFHGVFGSGPTLDEAFGLIDTAEKSAEVLVKVYSMGGMKQTITQEELIALGKRFGVTPMKSALELYK.

Glu-117 is a catalytic residue. Zn(2+)-binding residues include His-141, His-143, and His-212.

Belongs to the aldolase class II family. RhaD subfamily. In terms of assembly, homotetramer. Zn(2+) is required as a cofactor.

Its subcellular location is the cytoplasm. It catalyses the reaction L-rhamnulose 1-phosphate = (S)-lactaldehyde + dihydroxyacetone phosphate. It participates in carbohydrate degradation; L-rhamnose degradation; glycerone phosphate from L-rhamnose: step 3/3. Functionally, catalyzes the reversible cleavage of L-rhamnulose-1-phosphate to dihydroxyacetone phosphate (DHAP) and L-lactaldehyde. This is Rhamnulose-1-phosphate aldolase from Enterobacter sp. (strain 638).